Here is an 837-residue protein sequence, read N- to C-terminus: Valine--tRNA ligase (837 aa).

Positions 46–56 match the 'HIGH' region motif; the sequence is PNLTGTLHIGH. A 'KMSKS' region motif is present at residues 514-518; sequence KMSKS. Residue Lys517 participates in ATP binding. The stretch at 767 to 837 forms a coiled coil; the sequence is VDDTTQRLKS…QLIAKLTKAH (71 aa).

It belongs to the class-I aminoacyl-tRNA synthetase family. ValS type 1 subfamily. Monomer.

Its subcellular location is the cytoplasm. It carries out the reaction tRNA(Val) + L-valine + ATP = L-valyl-tRNA(Val) + AMP + diphosphate. In terms of biological role, catalyzes the attachment of valine to tRNA(Val). As ValRS can inadvertently accommodate and process structurally similar amino acids such as threonine, to avoid such errors, it has a 'posttransfer' editing activity that hydrolyzes mischarged Thr-tRNA(Val) in a tRNA-dependent manner. In Mycoplasma genitalium (strain ATCC 33530 / DSM 19775 / NCTC 10195 / G37) (Mycoplasmoides genitalium), this protein is Valine--tRNA ligase.